An 862-amino-acid chain; its full sequence is Chaperone protein ClpB 1 (862 aa).

Residues 5-147 (AEQFTEQAWA…KEAITAVRGN (143 aa)) form the Clp R domain. Repeat stretches follow at residues 8-72 (FTEQ…LQRL) and 84-147 (LGRS…VRGN). Positions 160–341 (ESLAKYGRDL…RRFQQVLVDQ (182 aa)) are NBD1. 207–214 (GEPGVGKT) serves as a coordination point for ATP. Residues 342-550 (PTVPDTISIL…IAEVIAKWTG (209 aa)) are linker. Positions 392–526 (IDLVDESAAR…QEDLLEDEDG (135 aa)) form a coiled coil. The tract at residues 560-771 (EMEKLLQLED…RLDDQIIFRS (212 aa)) is NBD2. 610 to 617 (GPTGVGKT) is an ATP binding site. The segment at 772 to 862 (LEKEELRRIV…DAGDDKLSIS (91 aa)) is C-terminal.

This sequence belongs to the ClpA/ClpB family. As to quaternary structure, homohexamer. The oligomerization is ATP-dependent.

The protein localises to the cytoplasm. Its function is as follows. Part of a stress-induced multi-chaperone system, it is involved in the recovery of the cell from heat-induced damage, in cooperation with DnaK, DnaJ and GrpE. Acts before DnaK, in the processing of protein aggregates. Protein binding stimulates the ATPase activity; ATP hydrolysis unfolds the denatured protein aggregates, which probably helps expose new hydrophobic binding sites on the surface of ClpB-bound aggregates, contributing to the solubilization and refolding of denatured protein aggregates by DnaK. In Parasynechococcus marenigrum (strain WH8102), this protein is Chaperone protein ClpB 1 (clpB1).